The primary structure comprises 227 residues: YEATS domain-containing protein 4 (227 aa).

The 144-residue stretch at 15–158 (RVKGVTIVKP…AMMQQLLTTS (144 aa)) folds into the YEATS domain. Lys37 participates in a covalent cross-link: Glycyl lysine isopeptide (Lys-Gly) (interchain with G-Cter in SUMO2). Residues 93 to 97 (WGEFE) are diacetylated histone H3 binding. The tract at residues 163 to 227 (LGAYKHETEF…LEEDDQTKDI (65 aa)) is interaction with MLLT10. Residues 168–227 (HETEFAELEVKTREKLEAAKKKTSFEIAELKERLKASRETINCLKNEIRKLEEDDQTKDI) form an interaction with TACC1 region. Residues 178 to 226 (KTREKLEAAKKKTSFEIAELKERLKASRETINCLKNEIRKLEEDDQTKD) adopt a coiled-coil conformation.

In terms of assembly, component of numerous complexes with chromatin remodeling and histone acetyltransferase activity. Component of the NuA4 histone acetyltransferase complex which contains the catalytic subunit KAT5/TIP60 and the subunits EP400, TRRAP/PAF400, BRD8/SMAP, EPC1, DMAP1/DNMAP1, RUVBL1/TIP49, RUVBL2, ING3, actin, ACTL6A/BAF53A, MORF4L1/MRG15, MORF4L2/MRGX, MRGBP, YEATS4/GAS41, VPS72/YL1 and MEAF6. The NuA4 complex interacts with MYC and the adenovirus E1A protein. Component of a NuA4-related complex which contains EP400, TRRAP/PAF400, SRCAP, BRD8/SMAP, EPC1, DMAP1/DNMAP1, RUVBL1/TIP49, RUVBL2, actin, ACTL6A/BAF53A, VPS72 and YEATS4/GAS41. Interacts with MLLT10/AF10. Also interacts with the SWI/SNF component SMARCB1/BAF47, TACC1 and TACC2, and the nuclear matrix protein NUMA1.

It is found in the nucleus. Chromatin reader component of the NuA4 histone acetyltransferase (HAT) complex, a complex involved in transcriptional activation of select genes principally by acetylation of nucleosomal histones H4 and H2A. Specifically recognizes and binds acylated histone H3, with a preference for histone H3 diacetylated at 'Lys-18' and 'Lys-27' (H3K18ac and H3K27ac) or histone H3 diacetylated at 'Lys-14' and 'Lys-27' (H3K14ac and H3K27ac). Also able to recognize and bind crotonylated histone H3. May also recognize and bind histone H3 succinylated at 'Lys-122' (H3K122succ); additional evidences are however required to confirm this result in vivo. Plays a key role in histone variant H2AZ1/H2A.Z deposition into specific chromatin regions: recognizes and binds H3K14ac and H3K27ac on the promoters of actively transcribed genes and recruits NuA4-related complex to deposit H2AZ1/H2A.Z. H2AZ1/H2A.Z deposition is required for maintenance of embryonic stem cell. The polypeptide is YEATS domain-containing protein 4 (Mus musculus (Mouse)).